The following is a 263-amino-acid chain: Small ribosomal subunit protein eS4 (263 aa).

Residues 42-104 (LPLVIFLRNR…TNELFRLIYD (63 aa)) form the S4 RNA-binding domain.

Belongs to the eukaryotic ribosomal protein eS4 family.

The protein is Small ribosomal subunit protein eS4 (RpS4) of Spodoptera frugiperda (Fall armyworm).